The chain runs to 280 residues: MAAVVAVSLKRWFPATTLGGACLQACRGAQTAAATAPRIKKFAIYRWDPDKTGDKPHMQTYEIDLNNCGPMVLDALIKIKNEIDSTLTFRRSCREGICGSCAMNINGGNTLACTRRIDTNLDKVSKIYPLPHMYVIKDLVPDLSNFYAQYKSIEPYLKKKDESQEGKQQYLQSIEEREKLDGLYECILCACCSTSCPSYWWNGDKYLGPAVLMQAYRWMIDSRDDFTEERLAKLQDPFSLYRCHTIMNCTGTCPKGLNPGKAIAEIKKMMATYKEKKASA.

The N-terminal 28 residues, 1–28 (MAAVVAVSLKRWFPATTLGGACLQACRG), are a transit peptide targeting the mitochondrion. Residues 40-131 (KKFAIYRWDP…DKVSKIYPLP (92 aa)) enclose the 2Fe-2S ferredoxin-type domain. Residues lysine 51 and lysine 55 each carry the N6-acetyllysine modification. Residues cysteine 93, cysteine 98, cysteine 101, and cysteine 113 each coordinate [2Fe-2S] cluster. The interval 146–218 (FYAQYKSIEP…PAVLMQAYRW (73 aa)) is interaction with SDHAF1. The 4Fe-4S ferredoxin-type domain maps to 176-206 (EREKLDGLYECILCACCSTSCPSYWWNGDKY). Positions 186, 189, and 192 each coordinate [4Fe-4S] cluster. Cysteine 196 contacts [3Fe-4S] cluster. Residue tryptophan 201 participates in a ubiquinone binding. Cysteine 243 and cysteine 249 together coordinate [3Fe-4S] cluster. Residue cysteine 253 coordinates [4Fe-4S] cluster.

The protein belongs to the succinate dehydrogenase/fumarate reductase iron-sulfur protein family. Component of complex II composed of four subunits: the flavoprotein (FP) SDHA, iron-sulfur protein (IP) SDHB, and a cytochrome b560 composed of SDHC and SDHD. Interacts with SDHAF1; the interaction is required for iron-sulfur cluster incorporation into SDHB. Requires [2Fe-2S] cluster as cofactor. [3Fe-4S] cluster is required as a cofactor. [4Fe-4S] cluster serves as cofactor.

Its subcellular location is the mitochondrion inner membrane. It catalyses the reaction a quinone + succinate = fumarate + a quinol. It carries out the reaction (R)-malate + a quinone = enol-oxaloacetate + a quinol. The enzyme catalyses (S)-malate + a quinone = enol-oxaloacetate + a quinol. It participates in carbohydrate metabolism; tricarboxylic acid cycle; fumarate from succinate (eukaryal route): step 1/1. Enol-oxaloacetate inhibits the succinate dehydrogenase activity. Its function is as follows. Iron-sulfur protein (IP) subunit of the succinate dehydrogenase complex (mitochondrial respiratory chain complex II), responsible for transferring electrons from succinate to ubiquinone (coenzyme Q). SDH also oxidizes malate to the non-canonical enol form of oxaloacetate, enol-oxaloacetate. Enol-oxaloacetate, which is a potent inhibitor of the succinate dehydrogenase activity, is further isomerized into keto-oxaloacetate. In Sus scrofa (Pig), this protein is Succinate dehydrogenase [ubiquinone] iron-sulfur subunit, mitochondrial (SDHB).